The primary structure comprises 224 residues: Ion-translocating oxidoreductase complex subunit E (224 aa).

5 helical membrane passes run 51–71 (LGLG…VSLF), 81–101 (IPIY…LMNA), 105–125 (SLYQ…IVIG), 140–160 (MFDG…LGAI), and 194–214 (HFLL…ILAI).

Belongs to the NqrDE/RnfAE family. As to quaternary structure, the complex is composed of six subunits: RnfA, RnfB, RnfC, RnfD, RnfE and RnfG.

It is found in the cell inner membrane. Its function is as follows. Part of a membrane-bound complex that couples electron transfer with translocation of ions across the membrane. The chain is Ion-translocating oxidoreductase complex subunit E from Pasteurella multocida (strain Pm70).